The primary structure comprises 181 residues: Adenylate kinase (181 aa).

ATP is bound at residue glycine 10–threonine 15. Positions serine 30–valine 59 are NMP. Residues threonine 31, arginine 36, lysine 57–valine 59, glycine 85–arginine 88, and glutamine 92 each bind AMP. Positions serine 126–aspartate 132 are LID. Arginine 127 is a binding site for ATP. AMP-binding residues include arginine 129 and arginine 140. Position 166 (glycine 166) interacts with ATP.

This sequence belongs to the adenylate kinase family. As to quaternary structure, monomer.

The protein localises to the cytoplasm. It catalyses the reaction AMP + ATP = 2 ADP. Its pathway is purine metabolism; AMP biosynthesis via salvage pathway; AMP from ADP: step 1/1. Functionally, catalyzes the reversible transfer of the terminal phosphate group between ATP and AMP. Plays an important role in cellular energy homeostasis and in adenine nucleotide metabolism. The polypeptide is Adenylate kinase (Corynebacterium urealyticum (strain ATCC 43042 / DSM 7109)).